The sequence spans 357 residues: MAEITAAMVKELRESTGAGMMDCKNALSETNGDFDKAVQLLREKGLGKAAKKADRLAAEGLVSVKVSDDFTSATVSEINSETDFVAKNDQFIALTKDTTAHIQSNSLQSVEELHSSTINGVKFEEYLKSQIATIGENLVVRRFATLKAGANGVVNGYIHTNGRVGVVIAAACDSTEVASKSRDLLRQICMHIAAMRPSYLSYEDLDMTFVENEYKALVAELEKENEERRRLKDPNKPEHKIPQFASRKQLSDAILKEAEEKIKEELKAQGKPEKIWDNIIPGKINSFIADNSQLDSKLTLMGQFYVMDDKKTVEQVIAEKEKEFGGKIKIVEFICFEVGEGLEKKTEDFAAEVAAQL.

Positions 82-85 (TDFV) are involved in Mg(2+) ion dislocation from EF-Tu.

It belongs to the EF-Ts family.

The protein resides in the cytoplasm. In terms of biological role, associates with the EF-Tu.GDP complex and induces the exchange of GDP to GTP. It remains bound to the aminoacyl-tRNA.EF-Tu.GTP complex up to the GTP hydrolysis stage on the ribosome. This chain is Elongation factor Ts, found in Campylobacter jejuni subsp. jejuni serotype O:23/36 (strain 81-176).